The following is a 359-amino-acid chain: Peptide chain release factor 1 (359 aa).

N5-methylglutamine is present on glutamine 234.

It belongs to the prokaryotic/mitochondrial release factor family. In terms of processing, methylated by PrmC. Methylation increases the termination efficiency of RF1.

Its subcellular location is the cytoplasm. Its function is as follows. Peptide chain release factor 1 directs the termination of translation in response to the peptide chain termination codons UAG and UAA. The polypeptide is Peptide chain release factor 1 (Clavibacter michiganensis subsp. michiganensis (strain NCPPB 382)).